The following is a 227-amino-acid chain: Small ribosomal subunit protein uS3 (227 aa).

Residues 38-106 (LRKFIKDRFY…NVNINIQEIR (69 aa)) enclose the KH type-2 domain.

Belongs to the universal ribosomal protein uS3 family. Part of the 30S ribosomal subunit. Forms a tight complex with proteins S10 and S14.

In terms of biological role, binds the lower part of the 30S subunit head. Binds mRNA in the 70S ribosome, positioning it for translation. The chain is Small ribosomal subunit protein uS3 from Syntrophomonas wolfei subsp. wolfei (strain DSM 2245B / Goettingen).